Reading from the N-terminus, the 159-residue chain is NADH-quinone oxidoreductase subunit B (159 aa).

Residues cysteine 32, cysteine 33, cysteine 97, and cysteine 126 each coordinate [4Fe-4S] cluster.

It belongs to the complex I 20 kDa subunit family. NDH-1 is composed of 14 different subunits. Subunits NuoB, C, D, E, F, and G constitute the peripheral sector of the complex. [4Fe-4S] cluster is required as a cofactor.

The protein resides in the cell inner membrane. It carries out the reaction a quinone + NADH + 5 H(+)(in) = a quinol + NAD(+) + 4 H(+)(out). Functionally, NDH-1 shuttles electrons from NADH, via FMN and iron-sulfur (Fe-S) centers, to quinones in the respiratory chain. The immediate electron acceptor for the enzyme in this species is believed to be ubiquinone. Couples the redox reaction to proton translocation (for every two electrons transferred, four hydrogen ions are translocated across the cytoplasmic membrane), and thus conserves the redox energy in a proton gradient. The chain is NADH-quinone oxidoreductase subunit B from Helicobacter pylori (strain P12).